Consider the following 324-residue polypeptide: COP9 signalosome complex subunit 6 (324 aa).

One can recognise an MPN domain in the interval Val-38–Ile-171.

Belongs to the peptidase M67A family. CSN6 subfamily. Component of the CSN complex, composed of COPS1/GPS1, COPS2, COPS3, COPS4, COPS5, COPS6, COPS7 (COPS7A or COPS7B), COPS8 and COPS9. In the complex, it probably interacts directly with COPS2, COPS4, COPS5, COPS7 (COPS7A or COPS7B) and COPS9. Interacts with the translation initiation factor EIF3S6. Interacts weakly with RBX1. Directly interacts with COP1 and 14-3-3 protein sigma/SFN. Interacts with ERCC6.

Its subcellular location is the cytoplasm. The protein localises to the nucleus. Component of the COP9 signalosome complex (CSN), a complex involved in various cellular and developmental processes. The CSN complex is an essential regulator of the ubiquitin (Ubl) conjugation pathway by mediating the deneddylation of the cullin subunits of SCF-type E3 ligase complexes, leading to decrease the Ubl ligase activity of SCF-type complexes such as SCF, CSA or DDB2. The complex is also involved in phosphorylation of p53/TP53, c-jun/JUN, IkappaBalpha/NFKBIA, ITPK1 and IRF8, possibly via its association with CK2 and PKD kinases. CSN-dependent phosphorylation of TP53 and JUN promotes and protects degradation by the Ubl system, respectively. Has some glucocorticoid receptor-responsive activity. Stabilizes COP1 through reducing COP1 auto-ubiquitination and decelerating COP1 turnover rate, hence regulates the ubiquitination of COP1 targets, including SFN. The polypeptide is COP9 signalosome complex subunit 6 (Cops6) (Mus musculus (Mouse)).